A 229-amino-acid chain; its full sequence is Ras-related protein Rab-33B (229 aa).

Residues Asn43, Val44, Gly45, Lys46, Thr47, Cys48, Thr62, and Thr65 each coordinate GTP. Residue Thr47 coordinates Mg(2+). The Switch 1 motif lies at 56–68; the sequence is GRFPDRTEATIGV. The Mg(2+) site is built by Thr65 and Asp88. The Switch 2 motif lies at 89–108; that stretch reads TAGQERFRKSMVQHYYRNVH. Residues Gly91, Asn148, Lys149, Asp151, Ala179, and Lys180 each coordinate GTP. Residues Cys227 and Cys229 are each lipidated (S-geranylgeranyl cysteine). Cys229 is subject to Cysteine methyl ester.

It belongs to the small GTPase superfamily. Rab family. In terms of assembly, interacts (GTP- and GDP-bound forms) with ATG16L1; the complex consists of a tetramer where two RAB33B molecules bind independently one molecule of the ATG16L1 homodimer; the interaction promotes ATG12-ATG5-ATG16L1 complex recruitment to phagophores. Interacts with ATG16L2; however interaction is approximately hundred times lower than for ATG16L1. Interacts with RIC1 (via C-terminus domain); the interaction is direct with a preference for RAB33B-GTP. Interacts with RGP1. It depends on Mg(2+) as a cofactor. Prenylated.

It localises to the golgi apparatus membrane. Its subcellular location is the golgi apparatus. The protein localises to the cis-Golgi network. The protein resides in the preautophagosomal structure membrane. The catalysed reaction is GTP + H2O = GDP + phosphate + H(+). Regulated by guanine nucleotide exchange factors (GEFs) which promote the exchange of bound GDP for free GTP. Regulated by GTPase activating proteins (GAPs) such as SGSM2 which increase the GTP hydrolysis activity. Inhibited by GDP dissociation inhibitors (GDIs). In terms of biological role, the small GTPases Rab are key regulators of intracellular membrane trafficking, from the formation of transport vesicles to their fusion with membranes. Rabs cycle between an inactive GDP-bound form and an active GTP-bound form that is able to recruit to membranes different sets of downstream effectors directly responsible for vesicle formation, movement, tethering and fusion. RAB33B acts, in coordination with RAB6A, to regulate intra-Golgi retrograde trafficking. Participates in autophagosome formation by recruiting the ATG12-ATG5-ATG16L1 complex to phagophores, probably in a nucleotide-independent manner. This chain is Ras-related protein Rab-33B (RAB33B), found in Pongo abelii (Sumatran orangutan).